The following is a 180-amino-acid chain: Inner membrane-spanning protein YciB (180 aa).

A run of 5 helical transmembrane segments spans residues 25–45 (QNATLYMLITSIICITLCYII), 49–69 (VSKLSIISSTVLFISGIITLI), 76–96 (IKIKPTILYVIFGIIFLMSGI), 118–138 (IILSYRTAAFFFFMAVVNEVV), and 150–170 (FKVFGVIPITFIFILLQLPLL).

This sequence belongs to the YciB family.

It localises to the cell inner membrane. Functionally, plays a role in cell envelope biogenesis, maintenance of cell envelope integrity and membrane homeostasis. The protein is Inner membrane-spanning protein YciB of Rickettsia prowazekii (strain Madrid E).